A 1578-amino-acid polypeptide reads, in one-letter code: Bromodomain-containing protein DDB_G0270170 (1578 aa).

The segment covering 1-12 (MSLEQQDETVVE) has biased composition (acidic residues). 4 disordered regions span residues 1 to 39 (MSLE…TYKE), 108 to 127 (NNNN…NNTE), 151 to 285 (HYSD…AKEL), and 319 to 454 (NENI…TTQT). A compositionally biased stretch (low complexity) spans 18-35 (SFETNNSTANNTNNNTDN). The span at 152 to 163 (YSDDESSKEKQD) shows a compositional bias: basic and acidic residues. Low complexity-rich tracts occupy residues 164 to 185 (NINS…SENI) and 197 to 231 (TTPS…TTTN). Polar residues-rich tracts occupy residues 319–332 (NENI…STTK) and 340–351 (TASTTNTPIITA). The segment covering 352–383 (QQNTTPLSPTQTTTTTTTPTTTTAQQNTPAQT) has biased composition (low complexity). The segment covering 384–395 (ESKPPTTISINI) has biased composition (polar residues). Low complexity-rich tracts occupy residues 396–407 (KGSKSPKTTGGK) and 417–433 (VVIS…VATT). Residues 443–454 (STANNNSETTQT) show a composition bias toward polar residues. The stretch at 479 to 506 (SDSATIQQLQQSISMLEDKIRLISSNNK) forms a coiled coil. 2 disordered regions span residues 543–565 (FTKS…YSDD) and 580–730 (IPIP…RMGK). 2 stretches are compositionally biased toward low complexity: residues 604–653 (NTST…PPQQ) and 660–686 (TQQE…DTTT). One can recognise a Bromo domain in the interval 735-841 (VVLTPVFKRC…DVFEKGFPKV (107 aa)). Residues 851 to 903 (KNVDQEKIEKLSNDLKNVTKELEKFKKDDSNSINNNNNNNNNYNNNNNNNNNN) are a coiled coil. Disordered stretches follow at residues 874–969 (KFKK…KVTT), 1039–1167 (HALP…NNNN), 1184–1452 (SIPE…TDSA), and 1480–1544 (EREE…KGNM). 3 stretches are compositionally biased toward low complexity: residues 881 to 911 (NSIN…SSRS), 918 to 961 (SSGS…SSNN), and 1047 to 1061 (SSTH…DSSS). An NET domain is found at 957-1039 (SSSNNKKYPK…QYKNGEIPQH (83 aa)). The segment covering 1064–1077 (REIEKLQKQLDRLG) has biased composition (basic and acidic residues). The span at 1092–1107 (HSKRISKPISKARGRK) shows a compositional bias: basic residues. Positions 1112-1167 (SSSNLNNSSNNINNNNNNINNYNNNNNYNNNNNNNLNNNNNNNINSNLNNNLNNNN) are enriched in low complexity. Residues 1113–1150 (SSNLNNSSNNINNNNNNINNYNNNNNYNNNNNNNLNNN) adopt a coiled-coil conformation. A compositionally biased stretch (acidic residues) spans 1192–1204 (TDISESSDSESDS). 2 stretches are compositionally biased toward low complexity: residues 1205-1218 (ESGS…YSDS) and 1231-1334 (YNNS…SLTN). The stretch at 1280–1308 (NSNNNNSNNNNNNVNNNNNNHNNNNHNNN) forms a coiled coil. The segment covering 1356–1369 (SVASWSFDPTNNKE) has biased composition (polar residues). Residues 1370 to 1386 (SSSSSSTSSTSSTSNTT) show a composition bias toward low complexity. The segment covering 1387–1399 (LTPIIQQSSLTHA) has biased composition (polar residues). 2 stretches are compositionally biased toward low complexity: residues 1400 to 1424 (SSPI…NNLS) and 1432 to 1451 (NSPS…NTDS). Positions 1462–1544 (TLKQKEKERV…EKLNNSKGNM (83 aa)) form a coiled coil. The span at 1480 to 1538 (EREEKEEELKKEEEKKRIEMEEIKRLAKEKEEREAEETRKQIESERAAAREAREKEKLN) shows a compositional bias: basic and acidic residues.

In Dictyostelium discoideum (Social amoeba), this protein is Bromodomain-containing protein DDB_G0270170.